The primary structure comprises 534 residues: Serine/threonine-protein kinase 35 (534 aa).

Residues 32–176 are disordered; it reads VESHGSLGAQ…AAAARAMDPV (145 aa). Composition is skewed to low complexity over residues 39–65 and 166–176; these read GAQASPASAAAAEGSATRRARAATSRA and PAAAARAMDPV. In terms of domain architecture, Protein kinase spans 202 to 530; that stretch reads YSLLAEIGRG…FELETRMDQV (329 aa). ATP-binding positions include 208 to 216 and lysine 231; that span reads IGRGSYGVV. The active-site Proton acceptor is the aspartate 360.

It belongs to the protein kinase superfamily. Ser/Thr protein kinase family. As to quaternary structure, interacts with PDLIM1/CLP-36. Autophosphorylated. As to expression, expressed in testis.

It localises to the nucleus. The protein resides in the nucleolus. It is found in the cytoplasm. The catalysed reaction is L-seryl-[protein] + ATP = O-phospho-L-seryl-[protein] + ADP + H(+). It catalyses the reaction L-threonyl-[protein] + ATP = O-phospho-L-threonyl-[protein] + ADP + H(+). The sequence is that of Serine/threonine-protein kinase 35 (STK35) from Homo sapiens (Human).